Consider the following 193-residue polypeptide: Probable DNA-directed RNA polymerase subunit delta (193 aa).

Positions 14-83 constitute an HTH HARE-type domain; sequence LSMIEVARAI…GDNKWGLRSW (70 aa). Composition is skewed to acidic residues over residues 119–133 and 143–193; these read EDAI…EDEN and YDND…ETND. Residues 119–193 are disordered; the sequence is EDAIDYNDDD…DDDYEDETND (75 aa).

It belongs to the RpoE family. In terms of assembly, RNAP is composed of a core of 2 alpha, a beta and a beta' subunits. The core is associated with a delta subunit and one of several sigma factors.

Participates in both the initiation and recycling phases of transcription. In the presence of the delta subunit, RNAP displays an increased specificity of transcription, a decreased affinity for nucleic acids, and an increased efficiency of RNA synthesis because of enhanced recycling. This Streptococcus thermophilus (strain CNRZ 1066) protein is Probable DNA-directed RNA polymerase subunit delta.